The sequence spans 424 residues: Histidine--tRNA ligase (424 aa).

This sequence belongs to the class-II aminoacyl-tRNA synthetase family. Homodimer.

It is found in the cytoplasm. The enzyme catalyses tRNA(His) + L-histidine + ATP = L-histidyl-tRNA(His) + AMP + diphosphate + H(+). The polypeptide is Histidine--tRNA ligase (Bacillus licheniformis (strain ATCC 14580 / DSM 13 / JCM 2505 / CCUG 7422 / NBRC 12200 / NCIMB 9375 / NCTC 10341 / NRRL NRS-1264 / Gibson 46)).